The primary structure comprises 237 residues: Type III pantothenate kinase (237 aa).

Residue 6-13 participates in ATP binding; the sequence is DAGNSRVK. Substrate is bound by residues Tyr86 and 93–96; that span reads GADR. Asp95 functions as the Proton acceptor in the catalytic mechanism. Thr118 is a binding site for ATP. Residue Thr168 coordinates substrate.

Belongs to the type III pantothenate kinase family. As to quaternary structure, homodimer. It depends on NH4(+) as a cofactor. K(+) is required as a cofactor.

The protein localises to the cytoplasm. The catalysed reaction is (R)-pantothenate + ATP = (R)-4'-phosphopantothenate + ADP + H(+). The protein operates within cofactor biosynthesis; coenzyme A biosynthesis; CoA from (R)-pantothenate: step 1/5. Functionally, catalyzes the phosphorylation of pantothenate (Pan), the first step in CoA biosynthesis. The chain is Type III pantothenate kinase from Chromobacterium violaceum (strain ATCC 12472 / DSM 30191 / JCM 1249 / CCUG 213 / NBRC 12614 / NCIMB 9131 / NCTC 9757 / MK).